We begin with the raw amino-acid sequence, 466 residues long: 3-isopropylmalate dehydratase large subunit (466 aa).

C347, C407, and C410 together coordinate [4Fe-4S] cluster.

Belongs to the aconitase/IPM isomerase family. LeuC type 1 subfamily. Heterodimer of LeuC and LeuD. [4Fe-4S] cluster serves as cofactor.

It catalyses the reaction (2R,3S)-3-isopropylmalate = (2S)-2-isopropylmalate. It functions in the pathway amino-acid biosynthesis; L-leucine biosynthesis; L-leucine from 3-methyl-2-oxobutanoate: step 2/4. In terms of biological role, catalyzes the isomerization between 2-isopropylmalate and 3-isopropylmalate, via the formation of 2-isopropylmaleate. The sequence is that of 3-isopropylmalate dehydratase large subunit from Escherichia coli O157:H7.